Consider the following 224-residue polypeptide: Synaptogyrin-2 (224 aa).

N-acetylmethionine is present on Met-1. Position 3 is a phosphoserine (Ser-3). Residues 20-171 (YVSQPQVVTR…LASLAYQRYK (152 aa)) enclose the MARVEL domain. Transmembrane regions (helical) follow at residues 30 to 50 (LVSM…GYIN), 73 to 93 (AIGV…AFFS), 105 to 125 (VIGD…GFCF), and 147 to 167 (AAIT…SLAY).

This sequence belongs to the synaptogyrin family. In terms of processing, may be tyrosine phosphorylated by Src. In terms of tissue distribution, ubiquitously expressed with lower expression in brain (at protein level).

It is found in the cytoplasmic vesicle membrane. Its subcellular location is the cytoplasmic vesicle. The protein resides in the secretory vesicle. It localises to the synaptic vesicle membrane. Its function is as follows. May play a role in regulated exocytosis. In neuronal cells, modulates the localization of synaptophysin/SYP into synaptic-like microvesicles and may therefore play a role in the formation and/or the maturation of this vesicles. May also play a role in GLUT4 storage and transport to the plasma membrane. The chain is Synaptogyrin-2 from Rattus norvegicus (Rat).